A 371-amino-acid polypeptide reads, in one-letter code: GDP-perosamine synthase (371 aa).

Lys-186 is subject to N6-(pyridoxal phosphate)lysine.

Belongs to the DegT/DnrJ/EryC1 family. As to quaternary structure, homodimer. Pyridoxal 5'-phosphate is required as a cofactor.

The enzyme catalyses GDP-alpha-D-perosamine + 2-oxoglutarate = GDP-4-dehydro-alpha-D-rhamnose + L-glutamate. The protein operates within bacterial outer membrane biogenesis; LPS O-antigen biosynthesis. Catalyzes the synthesis of GDP-perosamine from GDP-4-keto-6-deoxy-D-mannose and L-glutamate. Can use only L-glutamate as amino donor. In vitro, can also use GDP-4-keto-3,6-dideoxymannose to produce GDP-3-deoxyperosamine. Involved in the formation of S-LPS, which is required for attachment of the protein S-layer to the outer membrane surface. This is GDP-perosamine synthase from Caulobacter vibrioides (strain ATCC 19089 / CIP 103742 / CB 15) (Caulobacter crescentus).